A 239-amino-acid chain; its full sequence is MADS-box transcription factor 34 (239 aa).

The MADS-box domain maps to 1-61; that stretch reads MGRGKVVLQR…GRLYQFSSSS (61 aa). The region spanning 88-178 is the K-box domain; sequence MQNNYQEYVN…KRKLDEIDVE (91 aa). The interval 179–208 is disordered; the sequence is AAPPQPPWNGNCSNGHGGGGGVFSSEPPQP.

In terms of tissue distribution, highly expressed in leaves and at low levels in roots and spikelets (rice flower).

It is found in the nucleus. Probable transcription factor. In Oryza sativa subsp. japonica (Rice), this protein is MADS-box transcription factor 34 (MADS34).